Here is a 128-residue protein sequence, read N- to C-terminus: Small ribosomal subunit protein uS9 (128 aa).

Part of the 30S ribosomal subunit. Contacts proteins S7 and S10.

Part of the top of the head of the 30S subunit. The C-terminal region penetrates the head emerging in the P-site where it contacts tRNA. This is Small ribosomal subunit protein uS9 (rpsI) from Thermus thermophilus (strain ATCC 27634 / DSM 579 / HB8).